The sequence spans 135 residues: Crossover junction endodeoxyribonuclease Hje (135 aa).

Mg(2+) contacts are provided by E10, D39, and E52.

Belongs to the Holliday junction resolvase Hjc family. Hje subfamily. As to quaternary structure, homodimer. Requires Mg(2+) as cofactor.

It carries out the reaction Endonucleolytic cleavage at a junction such as a reciprocal single-stranded crossover between two homologous DNA duplexes (Holliday junction).. Functionally, a structure-specific endonuclease that resolves Holliday junction (HJ) intermediates during genetic recombination. Acts only on 4-way DNA junctions in a sequence non-specific manner; introduces paired nicks in opposing strands 2 bases 3' of the point of strand exchange only on continuous strands of 4-way junction DNA. Cleaves both mobile and immobile junctions. Plays a more direct role in DNA repair than Hjc. Overexpression of this protein decreases the growth rate, and leads to genomic instability, and global transcriptomic changes. The chain is Crossover junction endodeoxyribonuclease Hje from Saccharolobus islandicus (strain REY15A) (Sulfolobus islandicus).